Here is a 240-residue protein sequence, read N- to C-terminus: 4-hydroxy-tetrahydrodipicolinate reductase (240 aa).

7–12 lines the NAD(+) pocket; the sequence is GLSGTM. K35 is an NADP(+) binding site. NAD(+) is bound by residues 74 to 76 and 98 to 101; these read GTT and ATNM. The Proton donor/acceptor role is filled by H131. (S)-2,3,4,5-tetrahydrodipicolinate is bound at residue H132. Catalysis depends on K135, which acts as the Proton donor. Residue 141–142 participates in (S)-2,3,4,5-tetrahydrodipicolinate binding; the sequence is GS.

Belongs to the DapB family.

It is found in the cytoplasm. It catalyses the reaction (S)-2,3,4,5-tetrahydrodipicolinate + NAD(+) + H2O = (2S,4S)-4-hydroxy-2,3,4,5-tetrahydrodipicolinate + NADH + H(+). The catalysed reaction is (S)-2,3,4,5-tetrahydrodipicolinate + NADP(+) + H2O = (2S,4S)-4-hydroxy-2,3,4,5-tetrahydrodipicolinate + NADPH + H(+). It participates in amino-acid biosynthesis; L-lysine biosynthesis via DAP pathway; (S)-tetrahydrodipicolinate from L-aspartate: step 4/4. Its function is as follows. Catalyzes the conversion of 4-hydroxy-tetrahydrodipicolinate (HTPA) to tetrahydrodipicolinate. The polypeptide is 4-hydroxy-tetrahydrodipicolinate reductase (Alkaliphilus metalliredigens (strain QYMF)).